Consider the following 272-residue polypeptide: Protein FAM210A (272 aa).

Residues 117–229 enclose the DUF1279 domain; it reads DKSISLYQRF…GYMSTPPPVK (113 aa). Residues 136–156 form a helical membrane-spanning segment; it reads VLIPVHLITSGVWFGTFYYAA. Residues 229–271 are a coiled coil; the sequence is KEYLQDRMEETKELITEKMEETKDRLTEKLQETKEKVSFKKKV. The interval 246–272 is disordered; that stretch reads KMEETKDRLTEKLQETKEKVSFKKKVE.

It belongs to the FAM210 family. As to quaternary structure, interacts with ATAD3A.

Its subcellular location is the membrane. The protein resides in the mitochondrion. The protein localises to the cytoplasm. Functionally, may play a role in the structure and strength of both muscle and bone. This is Protein FAM210A (FAM210A) from Pongo abelii (Sumatran orangutan).